Here is a 130-residue protein sequence, read N- to C-terminus: uncharacterized protein (130 aa).

3 helical membrane-spanning segments follow: residues 34–54 (AILI…FAFF), 73–93 (LLLT…GWLA), and 107–127 (FGTG…IVWI).

The protein localises to the cell membrane. This is an uncharacterized protein from Mycoplasma pneumoniae (strain ATCC 29342 / M129 / Subtype 1) (Mycoplasmoides pneumoniae).